The primary structure comprises 118 residues: T cell receptor gamma variable 4 (118 aa).

Positions 1–17 (MQWALAVLLAFLSPASQ) are cleaved as a signal peptide. Residues 18-118 (KSSNLEGRTK…GVYYCATWDG (101 aa)) enclose the Ig-like domain. A disulfide bridge links C41 with C113. N106 is a glycosylation site (N-linked (GlcNAc...) asparagine).

Gamma-delta TR is a heterodimer composed of a gamma and delta chain; disulfide-linked. The gamma-delta TR is associated with the transmembrane signaling CD3 coreceptor proteins following the stoichiometry: a single gamma-delta TR heterodimer associates with one CD3D-CD3E heterodimer, one CD3G-CD3E heterodimer and one CD247 homodimer forming a stable octameric structure. Upon activation, gamma-delta TR complex associates with FCER1G to initiate intracellular signaling.

The protein resides in the cell membrane. V region of the variable domain of T cell receptor (TR) gamma chain that participates in the antigen recognition. Gamma-delta TRs recognize a variety of self and foreign non-peptide antigens frequently expressed at the epithelial boundaries between the host and external environment, including endogenous lipids presented by MH-like protein CD1D and phosphoantigens presented by butyrophilin-like molecule BTN3A1. Upon antigen recognition induces rapid, innate-like immune responses involved in pathogen clearance and tissue repair. Binding of gamma-delta TR complex to antigen triggers phosphorylation of immunoreceptor tyrosine-based activation motifs (ITAMs) in the CD3 chains by the LCK and FYN kinases, allowing the recruitment, phosphorylation, and activation of ZAP70 that facilitates phosphorylation of the scaffolding proteins LCP2 and LAT. This lead to the formation of a supramolecular signalosome that recruits the phospholipase PLCG1, resulting in calcium mobilization and ERK activation, ultimately leading to T cell expansion and differentiation into effector cells. Gamma-delta TRs are produced through somatic rearrangement of a limited repertoire of variable (V), diversity (D), and joining (J) genes. The potential diversity of gamma-delta TRs is conferred by the unique ability to rearrange (D) genes in tandem and to utilize all three reading frames. The combinatorial diversity is considerably increased by the sequence exonuclease trimming and random nucleotide (N) region additions which occur during the V-(D)-J rearrangements. The protein is T cell receptor gamma variable 4 of Homo sapiens (Human).